Here is a 445-residue protein sequence, read N- to C-terminus: Tubby-like F-box protein 10 (445 aa).

Positions 57–112 (SRWANLPPELLFDVIKRLEESESNWPARKHVVACASVCRSWRAMCQEIVLGPEICG) constitute an F-box domain. Residues 382-398 (PQPQGTGAAAAPTSAPA) are compositionally biased toward low complexity. The disordered stretch occupies residues 382 to 401 (PQPQGTGAAAAPTSAPAHPE).

Belongs to the TUB family. Part of a SCF (ASK-cullin-F-box) protein ligase complex. Interacts with SKP1A/ASK1. As to expression, ubiquitous.

The protein localises to the nucleus. It functions in the pathway protein modification; protein ubiquitination. Its function is as follows. Component of SCF(ASK-cullin-F-box) E3 ubiquitin ligase complexes, which may mediate the ubiquitination and subsequent proteasomal degradation of target proteins. The polypeptide is Tubby-like F-box protein 10 (Arabidopsis thaliana (Mouse-ear cress)).